Here is a 154-residue protein sequence, read N- to C-terminus: MNIIQGNLVGTGLKIGIVVGRFNEFITSKLLSGAEDTLIRHGVESNDIDVAWVPGAFEIPFAAKKMAETKKYDAVITLGTVIRGATTHYDYVCNEAAKGIAQAGTATGVPVIFGIVTTETIEQAIERAGTKAGNKGADCAVSAIEMANLNRSFE.

5-amino-6-(D-ribitylamino)uracil-binding positions include Phe22, 56 to 58 (AFE), and 80 to 82 (TVI). A (2S)-2-hydroxy-3-oxobutyl phosphate-binding site is contributed by 85–86 (AT). The Proton donor role is filled by His88. Residue Phe113 participates in 5-amino-6-(D-ribitylamino)uracil binding. A (2S)-2-hydroxy-3-oxobutyl phosphate-binding site is contributed by Arg127.

It belongs to the DMRL synthase family. Forms an icosahedral capsid composed of 60 subunits, arranged as a dodecamer of pentamers.

It catalyses the reaction (2S)-2-hydroxy-3-oxobutyl phosphate + 5-amino-6-(D-ribitylamino)uracil = 6,7-dimethyl-8-(1-D-ribityl)lumazine + phosphate + 2 H2O + H(+). It participates in cofactor biosynthesis; riboflavin biosynthesis; riboflavin from 2-hydroxy-3-oxobutyl phosphate and 5-amino-6-(D-ribitylamino)uracil: step 1/2. In terms of biological role, catalyzes the formation of 6,7-dimethyl-8-ribityllumazine by condensation of 5-amino-6-(D-ribitylamino)uracil with 3,4-dihydroxy-2-butanone 4-phosphate. This is the penultimate step in the biosynthesis of riboflavin. The polypeptide is 6,7-dimethyl-8-ribityllumazine synthase (Bacillus amyloliquefaciens (Bacillus velezensis)).